Here is a 162-residue protein sequence, read N- to C-terminus: NRR repressor homolog 3 (162 aa).

The disordered stretch occupies residues 1–80 (MDPTMPTPHT…GHEEEARDED (80 aa)). Over residues 7-24 (TPHTISGTSPFPRNSSTA) the composition is skewed to polar residues. The span at 37–46 (PRHRRSRKRD) shows a compositional bias: basic residues. The segment covering 69–80 (GHGHEEEARDED) has biased composition (basic and acidic residues).

It belongs to the NPR1-interactor family. In terms of assembly, interacts with NPR1/NH1. Interacts with NPR3/NH3.

It is found in the nucleus. Binds to and represses NPR1/NH1-mediated transcriptional activation of LG2 in vitro. The chain is NRR repressor homolog 3 from Oryza sativa subsp. japonica (Rice).